The chain runs to 297 residues: Superoxide dismutase 1 copper chaperone (297 aa).

Cysteine 11 provides a ligand contact to Cu cation. The segment at 222-263 is disordered; that stretch reads GSSCCSKKDSSPSEKPSCCSQEKKSCCSSKKPSCCSQEKKGC. The span at 234 to 257 shows a compositional bias: low complexity; that stretch reads SEKPSCCSQEKKSCCSSKKPSCCS.

It belongs to the CCS1 family.

The protein resides in the cytoplasm. Copper chaperone for superoxide dismutase 1 (sod1). Binds copper ions and delivers them specifically to sod1. Also has a role in cell protection against copper ion toxicity during conditions of copper excess. The C-terminal region is thought to act specifically in this sequestration role. The protein is Superoxide dismutase 1 copper chaperone (ccs1) of Schizosaccharomyces pombe (strain 972 / ATCC 24843) (Fission yeast).